A 574-amino-acid chain; its full sequence is Lipase maturation factor 1 (574 aa).

A disordered region spans residues 1-39 (MRPDSLVMAAPEGSLRKRKVGGAEHSPASQPSLARDPAD). At 1 to 49 (MRPDSLVMAAPEGSLRKRKVGGAEHSPASQPSLARDPADSPARLHTGTF) the chain is on the cytoplasmic side. Residues 50-72 (WLTRIVLLRALAFIYFVAFLVAF) form a helical membrane-spanning segment. Over 73 to 127 (NQNKALIGDRGLLPCKLYLKNVQEYFQGSTGWAAWTYAPTIMWLLDWSDMNFNLD) the chain is Lumenal. The helical transmembrane segment at 128–151 (LIALLGLGISSFVLVTGCANMILM) threads the bilayer. Residues 152–207 (TALWALYMSLVNVGQIWYSFGWESQLLETGFLGIFLSPLWTLSRLPKNTPTSQIVL) lie on the Cytoplasmic side of the membrane. Residues 208-221 (WGFRWLIFRIMLGA) traverse the membrane as a helical segment. The Lumenal portion of the chain corresponds to 222–292 (GLIKVRGDKC…LGRRMRILHG (71 aa)). The chain crosses the membrane as a helical span at residues 293-321 (VLQILFQVILIISGNLSFLNWLTIVPSLA). Residues 322-367 (CFDDAALGFLFPSGPQGLKKQVLEIQREDTQRVQPKPRDRGCLVRQ) lie on the Cytoplasmic side of the membrane. A helical transmembrane segment spans residues 368–388 (VVNISLGILVAWLSVPVVINL). The Lumenal segment spans residues 389 to 574 (LSSRQIMNTS…LPEPPSRHTR (186 aa)).

The protein belongs to the lipase maturation factor family. Interacts with LPL and SEL1L. Expressed in all tissues synthesizing lipoprotein lipase (Lpl) and hepatic lipase (Lipc), including adipose tissue, skeletal muscle, heart, and liver. Expressed at higher levels in tissues that express little or no lipase activity such as testis and pancreas suggesting additional functions in these tissues.

Its subcellular location is the endoplasmic reticulum membrane. Its function is as follows. Involved in the maturation of specific proteins in the endoplasmic reticulum. Required for maturation and transport of active lipoprotein lipase (LPL) through the secretory pathway. Each LMF1 molecule chaperones 50 or more molecules of LPL. This Mus musculus (Mouse) protein is Lipase maturation factor 1 (Lmf1).